Reading from the N-terminus, the 382-residue chain is Rubredoxin-NAD(+) reductase (382 aa).

Residues 9-12 (TGLA), 33-34 (TA), Lys-42, Val-80, Glu-156, Asp-275, Val-287, and Lys-318 contribute to the FAD site.

This sequence belongs to the FAD-dependent oxidoreductase family. As to quaternary structure, homodimer. FAD is required as a cofactor.

The protein localises to the cytoplasm. The enzyme catalyses 2 reduced [rubredoxin] + NAD(+) + H(+) = 2 oxidized [rubredoxin] + NADH. It participates in hydrocarbon metabolism; alkane degradation. Involved in the hydrocarbon hydroxylating system, which transfers electrons from NADH to rubredoxin reductase and then through rubredoxin to alkane 1 monooxygenase. This Alcanivorax borkumensis (strain ATCC 700651 / DSM 11573 / NCIMB 13689 / SK2) protein is Rubredoxin-NAD(+) reductase (rubB).